The following is a 205-amino-acid chain: MVRVKICGITNLEDALFSVESGADAVGFVFYPKSKRYISPEDARRISVELPPFVFRVGVFVNEEPEKILDVASYVQLNAVQLHGEEPIELCRKIAERILVIKAVGVSNERDMERALNYREFPILLDTKTPEYGGSGKTFDWSLILPYRDRFRYLVLSGGLNPENVRSAIDVVRPFAVDVSSGVEAFPGKKDHDSIKMFIKNAKGL.

Belongs to the TrpF family. Homodimer.

It carries out the reaction N-(5-phospho-beta-D-ribosyl)anthranilate = 1-(2-carboxyphenylamino)-1-deoxy-D-ribulose 5-phosphate. Its pathway is amino-acid biosynthesis; L-tryptophan biosynthesis; L-tryptophan from chorismate: step 3/5. This Thermotoga maritima (strain ATCC 43589 / DSM 3109 / JCM 10099 / NBRC 100826 / MSB8) protein is N-(5'-phosphoribosyl)anthranilate isomerase (trpF).